A 319-amino-acid chain; its full sequence is Acetyl-coenzyme A carboxylase carboxyl transferase subunit alpha (319 aa).

The 262-residue stretch at 32–293 (NVDAEVRALR…KAVLLNELDA (262 aa)) folds into the CoA carboxyltransferase C-terminal domain.

This sequence belongs to the AccA family. In terms of assembly, acetyl-CoA carboxylase is a heterohexamer composed of biotin carboxyl carrier protein (AccB), biotin carboxylase (AccC) and two subunits each of ACCase subunit alpha (AccA) and ACCase subunit beta (AccD).

Its subcellular location is the cytoplasm. It carries out the reaction N(6)-carboxybiotinyl-L-lysyl-[protein] + acetyl-CoA = N(6)-biotinyl-L-lysyl-[protein] + malonyl-CoA. Its pathway is lipid metabolism; malonyl-CoA biosynthesis; malonyl-CoA from acetyl-CoA: step 1/1. Component of the acetyl coenzyme A carboxylase (ACC) complex. First, biotin carboxylase catalyzes the carboxylation of biotin on its carrier protein (BCCP) and then the CO(2) group is transferred by the carboxyltransferase to acetyl-CoA to form malonyl-CoA. The protein is Acetyl-coenzyme A carboxylase carboxyl transferase subunit alpha of Xanthomonas campestris pv. campestris (strain B100).